The following is a 354-amino-acid chain: Guanine nucleotide-binding protein G(q) subunit alpha (354 aa).

S-palmitoyl cysteine attachment occurs at residues cysteine 3 and cysteine 4. In terms of domain architecture, G-alpha spans arginine 32–valine 354. Positions lysine 35 to threonine 48 are G1 motif. Residues glycine 40 to serine 47, leucine 174 to threonine 180, aspartate 199 to glutamine 203, asparagine 269 to aspartate 272, and alanine 326 each bind GTP. Mg(2+)-binding residues include serine 47 and threonine 180. The segment at aspartate 172–threonine 180 is G2 motif. The tract at residues phenylalanine 195–arginine 204 is G3 motif. The G4 motif stretch occupies residues isoleucine 265–aspartate 272. The tract at residues threonine 324 to threonine 329 is G5 motif.

It belongs to the G-alpha family. G(q) subfamily. G proteins are composed of 3 units; alpha, beta and gamma. The alpha chain contains the guanine nucleotide binding site. A high concentration was found in the retinal light-sensitive outer segment.

Functionally, guanine nucleotide-binding proteins (G proteins) are involved as modulators or transducers in various transmembrane signaling systems. In terms of biological role, the G(q) alpha subunit is involved in the light-dependent activation of phospholipase C. This chain is Guanine nucleotide-binding protein G(q) subunit alpha, found in Loligo forbesii (Veined squid).